The primary structure comprises 261 residues: Serine/arginine-rich splicing factor 12 (261 aa).

The RRM domain occupies 10–88 (TSLFIRNVAD…RQIEIQFAQG (79 aa)). The interval 86–261 (AQGDRKTPGQ…SRSYRHKNSW (176 aa)) is disordered. The span at 88–109 (GDRKTPGQMKSKERHPCSPSDH) shows a compositional bias: basic and acidic residues. 2 stretches are compositionally biased toward basic residues: residues 110–122 (RRSRSPSQRRTRS) and 178–191 (GRSRSKSLQKRSKS). The segment covering 192–209 (IGKSQSSSPQKQTSSGTK) has biased composition (low complexity). The span at 230–239 (GYTNSETKVQ) shows a compositional bias: polar residues. Residues 240-261 (TAKHSHFRSHSRSRSYRHKNSW) show a composition bias toward basic residues.

It belongs to the splicing factor SR family. In terms of tissue distribution, expressed in testis.

Its subcellular location is the nucleus. Splicing factor that seems to antagonize SR proteins in pre-mRNA splicing regulation. The chain is Serine/arginine-rich splicing factor 12 (SRSF12) from Homo sapiens (Human).